The sequence spans 3763 residues: Colossin-B (3763 aa).

Positions 1–19 (MKGSIFLLFIFQIFKFSSS) are cleaved as a signal peptide. 4 N-linked (GlcNAc...) asparagine glycosylation sites follow: Asn43, Asn110, Asn258, and Asn284. The Follistatin-like 1 domain occupies 619-643 (DCSTLQCPSGYECKLDKNSKTRGCI). Asn652 and Asn672 each carry an N-linked (GlcNAc...) asparagine glycan. 2 Follistatin-like domains span residues 701-724 (HCRN…PRCF) and 729-752 (PCEF…AKCF). Residues 792 to 832 (PPIFYETPSPTSAPPTETPSPTDTPTDKPTIPPTPTPTPSK) are disordered. The span at 810–820 (PSPTDTPTDKP) shows a compositional bias: low complexity. N-linked (GlcNAc...) asparagine glycans are attached at residues Asn845 and Asn991. 2 disordered regions span residues 1033 to 1068 (LGSS…SESS) and 1095 to 1124 (PQPT…PTST). A compositionally biased stretch (gly residues) spans 1036–1051 (SGSGSSGNSGSSGSGG). Composition is skewed to low complexity over residues 1052-1068 (SSND…SESS) and 1099-1124 (PSTD…PTST). N-linked (GlcNAc...) asparagine glycosylation occurs at Asn1054. In terms of domain architecture, CNA-B 1 spans 1159 to 1227 (VSGVEITLIQ…LLNKYPIDTS (69 aa)). Asn1229 and Asn1247 each carry an N-linked (GlcNAc...) asparagine glycan. Positions 1304–1373 (IKGIQVTLKD…VYTMDTFQLS (70 aa)) constitute a CNA-B 2 domain. Asn1381 carries an N-linked (GlcNAc...) asparagine glycan. 3 CNA-B domains span residues 1437-1515 (LPGV…IDTK), 1582-1648 (VPGI…LTLD), and 1731-1809 (VGGV…FTLS). N-linked (GlcNAc...) asparagine glycosylation is found at Asn1769 and Asn1815. The tract at residues 1883–1955 (GSTVDGGTSV…SEQPPEDSME (73 aa)) is disordered. The span at 1898–1948 (STSTTTVSSSPSSSSDIGSSSDISSEVSSSLSSSPSSSEQPSEQSSSSSEQ) shows a compositional bias: low complexity. The 69-residue stretch at 2015 to 2083 (VPDVTVTLVN…DPLSGKIDFN (69 aa)) folds into the CNA-B 6 domain. 21 N-linked (GlcNAc...) asparagine glycosylation sites follow: Asn2128, Asn2145, Asn2243, Asn2294, Asn2351, Asn2378, Asn2453, Asn2493, Asn2496, Asn2516, Asn2572, Asn2601, Asn2624, Asn2668, Asn2698, Asn2714, Asn2781, Asn2787, Asn2800, Asn2838, and Asn2858. Positions 2143–2197 (FPNITVRLFDQNLQPVLDNFNIQVEPTVTNALGQYYFDNLHSGSYIVKFEVPTRY) constitute a CNA-B 7 domain. Residues 2292 to 2345 (VPNVTVEIFNPTGQQVYNINELLIGSTTTDSNGYYLFDEIQPGSYIIKFSNIPN) form the CNA-B 8 domain. A CNA-B 9 domain is found at 2453 to 2477 (NTTTTDQNGLYYFDNLSPGLYKLLF). The 54-residue stretch at 2713–2766 (VNGTIVTLLDINGNTMVDADSYPINSYTTGPDGYYKFDDFSFGKYIITFSGVPD) folds into the CNA-B 10 domain. The CNA-B 11 domain occupies 2984 to 3061 (LGGVVVTLYN…DSNASPVDGY (78 aa)). Asn3083, Asn3130, Asn3372, Asn3390, Asn3459, Asn3466, Asn3557, Asn3666, Asn3676, and Asn3681 each carry an N-linked (GlcNAc...) asparagine glycan. The 74-residue stretch at 3128–3201 (YPNITVSIYT…TKTGVNLGII (74 aa)) folds into the CNA-B 12 domain. One can recognise a CNA-B 13 domain in the interval 3664 to 3733 (MANITVQLFS…NDKRDLEKIN (70 aa)).

This sequence belongs to the serine-aspartate repeat-containing protein (SDr) family.

The protein localises to the secreted. This Dictyostelium discoideum (Social amoeba) protein is Colossin-B (colB).